A 198-amino-acid chain; its full sequence is Recombination protein RecR (198 aa).

The C4-type zinc finger occupies 57–72; that stretch reads CSVCGRLTDDDPCIIC. The Toprim domain occupies 80–175; sequence TKILVVEDSK…KVTRLARGLA (96 aa).

Belongs to the RecR family.

May play a role in DNA repair. It seems to be involved in an RecBC-independent recombinational process of DNA repair. It may act with RecF and RecO. In Streptococcus thermophilus (strain CNRZ 1066), this protein is Recombination protein RecR.